The sequence spans 196 residues: Pyroglutamyl-peptidase 1-like protein (196 aa).

Active-site residues include Glu-65, Cys-127, and His-146.

It belongs to the peptidase C15 family.

The sequence is that of Pyroglutamyl-peptidase 1-like protein (PGPEP1L) from Homo sapiens (Human).